A 483-amino-acid chain; its full sequence is MRSVTSLVSFSACLLASSVTAADTPLTVNGKKFYSQDIITRDVVVVGGGSSGCHIAVRLQDAGKSVVVVEKSARLGGHVATYTDPATRKTAEQGLVTFHNTTHVTDYLTRLDIPLAPISFSPSTNFDYDLRTGKPVNRTYNPTQEEFAAGFAGYSAQLAKYPQLNDGTFLPYPVPEDLTMPFGKFLEKYNLTGALMQMYNFNWGTGNFLTNPTVEQMRYWGANTVAAVTTGKFLVTARHNSSEIYTKVGNVLGATSSVLLNSEVTYTRRSEGKTGVQLIVKTPEGSKLLVAKKLVIAIPPKLDFVAPLDLSKTEKDLFGKYIDAGYYVGMVRNTGIPARTLITNSAQDTPYNLPVLPAVNIMNPTAIDGVWTVFSSSLQSKASFPWADDAVKADIIRSIKALQTANPDKFQQTEPEIIEWHSHAPYFLQVSSEEIKNGFYAKLYALQGLRNTHFTGAAWRVHDSSQIWKYTDTQVLPKLLAGL.

A signal peptide spans 1-21; that stretch reads MRSVTSLVSFSACLLASSVTA. N-linked (GlcNAc...) asparagine glycans are attached at residues Asn100, Asn137, Asn190, and Asn240.

This sequence belongs to the beta-cyclopiazonate dehydrogenase family. The cofactor is FAD.

Its pathway is secondary metabolite biosynthesis; terpenoid biosynthesis. In terms of biological role, FAD-dependent oxidoreductase; part of the gene cluster that mediates the biosynthesis of the sesterterpenes ophiobolins, fungal phytotoxins with potential anti-cancer activities. The first step of the pathway is performed by the sesterterpene synthase oblA that possesses both prenyl transferase and terpene cyclase activity, converting isopentenyl diphosphate and dimethylallyl diphosphate into geranylfarnesyl diphosphate (GFPP) and further converting GFPP into ophiobolin F, respectively. Other sesterterpenoids (C(25) terpenoids) are found as minor products of oblA. The cytochrome P450 monooxygenase oblB then catalyzes a four-step oxidative transformation of ophiobolin F to yield ophiobolin C. The FAD-dependent oxidoreductase oblC might be involved in a later oxidation step that produces ophiobolin A. This chain is FAD-dependent oxidoreductase oblC, found in Cochliobolus heterostrophus (strain C5 / ATCC 48332 / race O) (Southern corn leaf blight fungus).